The primary structure comprises 372 residues: Histidinol-phosphate aminotransferase (372 aa).

Residue lysine 230 is modified to N6-(pyridoxal phosphate)lysine.

The protein belongs to the class-II pyridoxal-phosphate-dependent aminotransferase family. Histidinol-phosphate aminotransferase subfamily. Homodimer. Pyridoxal 5'-phosphate is required as a cofactor.

The catalysed reaction is L-histidinol phosphate + 2-oxoglutarate = 3-(imidazol-4-yl)-2-oxopropyl phosphate + L-glutamate. It participates in amino-acid biosynthesis; L-histidine biosynthesis; L-histidine from 5-phospho-alpha-D-ribose 1-diphosphate: step 7/9. This chain is Histidinol-phosphate aminotransferase, found in Paenarthrobacter aurescens (strain TC1).